The sequence spans 106 residues: Replication restart protein PriB (106 aa).

An SSB domain is found at 4–103 (VNRLVLSGTV…LHAEQIELID (100 aa)).

Belongs to the PriB family. As to quaternary structure, homodimer. Interacts with PriA and DnaT. Component of the replication restart primosome. Primosome assembly occurs via a 'hand-off' mechanism. PriA binds to replication forks, subsequently PriB then DnaT bind; DnaT then displaces ssDNA to generate the helicase loading substrate.

Its function is as follows. Involved in the restart of stalled replication forks, which reloads the replicative helicase on sites other than the origin of replication; the PriA-PriB pathway is the major replication restart pathway. During primosome assembly it facilitates complex formation between PriA and DnaT on DNA; stabilizes PriA on DNA. Stimulates the DNA unwinding activity of PriA helicase. The sequence is that of Replication restart protein PriB from Pectobacterium carotovorum subsp. carotovorum (strain PC1).